The sequence spans 607 residues: Phosphatidylinositol 4-kinase LSB6 (607 aa).

A compositionally biased stretch (polar residues) spans 73 to 88; sequence NVPSESPRPDQTSGSN. Residues 73–93 form a disordered region; the sequence is NVPSESPRPDQTSGSNPAVGL. The PI3K/PI4K catalytic domain occupies 161-522; that stretch reads GRELERIQTG…LVRRTRCQVI (362 aa). The segment at 167-173 is G-loop; it reads IQTGSSG. Residues 318 to 356 form a disordered region; it reads KSSGEDINHKPETTRNLTDETEPSKQINSSPISTESEEN. Residues 319–330 are compositionally biased toward basic and acidic residues; that stretch reads SSGEDINHKPET. Over residues 341 to 351 the composition is skewed to polar residues; that stretch reads SKQINSSPIST. A catalytic loop region spans residues 384 to 392; that stretch reads RNTDRGLDN. The segment at 411-431 is activation loop; the sequence is AIDNGLSFPWKHPDEWRLYPY.

This sequence belongs to the PI3/PI4-kinase family. In terms of assembly, interacts with LAS17. Mg(2+) is required as a cofactor. The cofactor is Mn(2+).

Its subcellular location is the cell membrane. The protein localises to the vacuole membrane. The catalysed reaction is a 1,2-diacyl-sn-glycero-3-phospho-(1D-myo-inositol) + ATP = a 1,2-diacyl-sn-glycero-3-phospho-(1D-myo-inositol 4-phosphate) + ADP + H(+). May play a role in endocytic and/or exocytic pathways. In Saccharomyces cerevisiae (strain ATCC 204508 / S288c) (Baker's yeast), this protein is Phosphatidylinositol 4-kinase LSB6 (LSB6).